A 58-amino-acid polypeptide reads, in one-letter code: MALWYQAMIAKFGEQVVDAKVWAPAKRVGVHEAKTRLSELLRLVYGGQRLRLPAAASR.

Functionally, putative antitoxin component of a possible type II toxin-antitoxin (TA) system. The cognate toxin is VapC16. This is Putative antitoxin VapB16 (vapB16) from Mycobacterium tuberculosis (strain ATCC 25618 / H37Rv).